A 473-amino-acid polypeptide reads, in one-letter code: N-lysine methyltransferase SETD6 (473 aa).

The segment at 1–23 (MAAPAKRARVSGGSPLVAPCPSP) is disordered. 2 positions are modified to phosphoserine: Ser-14 and Ser-22. Positions 62 to 286 (PKVTVSRQGT…EGHEIFNTYG (225 aa)) constitute an SET domain. An N6-methylated lysine; by autocatalysis modification is found at Lys-63. 73 to 75 (AGY) provides a ligand contact to S-adenosyl-L-methionine. Trp-122 contacts substrate. Lys-179 bears the N6-methylated lysine; by autocatalysis mark. Tyr-223 lines the S-adenosyl-L-methionine pocket. Residues Ser-224 and Gln-226 each contribute to the substrate site. S-adenosyl-L-methionine is bound by residues 251-252 (NH) and Tyr-297. An N6-methylated lysine; by autocatalysis modification is found at Lys-372.

The protein belongs to the class V-like SAM-binding methyltransferase superfamily. Histone-lysine methyltransferase family. SETD6 subfamily. As to quaternary structure, monomer, homodimer and homotrimer; these structures are stabilized in the presence of S-adenosyl-L-methionine (SAM). Post-translationally, automethylated.

It localises to the nucleus. The catalysed reaction is L-lysyl-[protein] + S-adenosyl-L-methionine = N(6)-methyl-L-lysyl-[protein] + S-adenosyl-L-homocysteine + H(+). It carries out the reaction L-lysyl(8)-[histone H2AZ] + S-adenosyl-L-methionine = N(6)-methyl-L-lysyl(8)-[histone H2AZ] + S-adenosyl-L-homocysteine + H(+). Functionally, protein-lysine N-methyltransferase. Monomethylates 'Lys-310' of the RELA subunit of NF-kappa-B complex, leading to down-regulation of NF-kappa-B transcription factor activity. Monomethylates 'Lys-8' of H2AZ (H2AZK8me1). Required for the maintenance of embryonic stem cell self-renewal. Methylates PAK4. The polypeptide is N-lysine methyltransferase SETD6 (Setd6) (Mus musculus (Mouse)).